A 130-amino-acid polypeptide reads, in one-letter code: Small ribosomal subunit protein uS9 (130 aa).

It belongs to the universal ribosomal protein uS9 family.

This Xylella fastidiosa (strain 9a5c) protein is Small ribosomal subunit protein uS9.